A 388-amino-acid polypeptide reads, in one-letter code: Diacylglycerol O-acyltransferase 2 (388 aa).

The Cytoplasmic segment spans residues 1–69 (MKTLIAAYSG…NRSKVEKQLQ (69 aa)). Residues 16-40 (RQAEADRSQRSHGGPALSREGSGRW) form a disordered region. Residues 70–88 (VISVLQWVLSFLVLGVACS) traverse the membrane as a helical segment. Residues 89 to 92 (AILM) lie on the Lumenal side of the membrane. A helical transmembrane segment spans residues 93–112 (YIFCTDCWLIAVLYFTWLVF). Residues 113–388 (DWNTPKKGGR…LPETEVLEVN (276 aa)) lie on the Cytoplasmic side of the membrane.

The protein belongs to the diacylglycerol acyltransferase family. In terms of assembly, forms multimeric complexes consisting of several DGAT2 subunits. Interacts with SLC27A1 and this interaction is enhanced in the presence of ZFYVE1. Predominantly expressed in liver and white adipose tissue. Expressed at lower level in mammary gland, testis and peripheral blood leukocytes. Expressed in sebaceous glands of normal skin but decreased psoriatic skin.

The protein resides in the endoplasmic reticulum membrane. It is found in the lipid droplet. It localises to the cytoplasm. Its subcellular location is the perinuclear region. The enzyme catalyses an acyl-CoA + a 1,2-diacyl-sn-glycerol = a triacyl-sn-glycerol + CoA. It carries out the reaction all-trans-retinol + an acyl-CoA = an all-trans-retinyl ester + CoA. It catalyses the reaction 2-(9Z-octadecenoyl)-glycerol + (9Z)-octadecenoyl-CoA = 1,2-di-(9Z-octadecenoyl)-sn-glycerol + CoA. The catalysed reaction is 1,2-di-(9Z-octadecenoyl)-sn-glycerol + (9Z)-octadecenoyl-CoA = 1,2,3-tri-(9Z-octadecenoyl)-glycerol + CoA. The enzyme catalyses all-trans-retinol + hexadecanoyl-CoA = all-trans-retinyl hexadecanoate + CoA. It carries out the reaction 1-O-(9Z-octadecenyl)-glycerol + (9Z)-octadecenoyl-CoA = 1-O-(9Z-octadecyl)-3-(9Z-octadecenoyl)-glycerol + CoA. It catalyses the reaction 1-(9Z-octadecenoyl)-glycerol + (9Z)-octadecenoyl-CoA = 1,2-di-(9Z-octadecenoyl)-glycerol + CoA. The catalysed reaction is 1,2-di-(9Z-octadecenoyl)-sn-glycerol + hexadecanoyl-CoA = 1,2-di-(9Z)-octadecenoyl-3-hexadecanoyl-sn-glycerol + CoA. The enzyme catalyses 1,3-di-(9Z-octadecenoyl)-glycerol + (9Z)-octadecenoyl-CoA = 1,2,3-tri-(9Z-octadecenoyl)-glycerol + CoA. It carries out the reaction 2,3-di-(9Z)-octadecenoyl-sn-glycerol + (9Z)-octadecenoyl-CoA = 1,2,3-tri-(9Z-octadecenoyl)-glycerol + CoA. It catalyses the reaction 2-(9Z-octadecenoyl)-glycerol + hexadecanoyl-CoA = 1-hexadecanoyl-2-(9Z-octadecenoyl)-sn-glycerol + CoA. It functions in the pathway glycerolipid metabolism; triacylglycerol biosynthesis. Its activity is regulated as follows. Inhibited by niacin. Functionally, essential acyltransferase that catalyzes the terminal and only committed step in triacylglycerol synthesis by using diacylglycerol and fatty acyl CoA as substrates. Required for synthesis and storage of intracellular triglycerides. Probably plays a central role in cytosolic lipid accumulation. In liver, is primarily responsible for incorporating endogenously synthesized fatty acids into triglycerides. Also functions as an acyl-CoA retinol acyltransferase (ARAT). Also able to use 1-monoalkylglycerol (1-MAkG) as an acyl acceptor for the synthesis of monoalkyl-monoacylglycerol (MAMAG). The sequence is that of Diacylglycerol O-acyltransferase 2 from Homo sapiens (Human).